We begin with the raw amino-acid sequence, 285 residues long: Ribosomal RNA small subunit methyltransferase H (285 aa).

Residues 34-36, Asp51, Phe75, Asp96, and His103 each bind S-adenosyl-L-methionine; that span reads AGH. Residues 258–285 are disordered; it reads PLVPSEKEAAQNPRARSAKLRAAEKEAP.

Belongs to the methyltransferase superfamily. RsmH family.

Its subcellular location is the cytoplasm. The enzyme catalyses cytidine(1402) in 16S rRNA + S-adenosyl-L-methionine = N(4)-methylcytidine(1402) in 16S rRNA + S-adenosyl-L-homocysteine + H(+). In terms of biological role, specifically methylates the N4 position of cytidine in position 1402 (C1402) of 16S rRNA. This Thermus thermophilus (strain ATCC BAA-163 / DSM 7039 / HB27) protein is Ribosomal RNA small subunit methyltransferase H.